Reading from the N-terminus, the 134-residue chain is Homeobox protein ceh-5 (134 aa).

Residues 35–94 constitute a DNA-binding region (homeobox); the sequence is PKRPRTVFTDEQLEKLEESFNTSGYLSGSTRAKLAESLGLSDNQVKVWFQNRRTKQKKID.

The protein resides in the nucleus. The protein is Homeobox protein ceh-5 (ceh-5) of Caenorhabditis elegans.